Reading from the N-terminus, the 152-residue chain is Transmembrane protein 35B (152 aa).

An N-terminal signal peptide occupies residues 1–21 (MLVSLGALRVLLGIFFTLTGA). A run of 3 helical transmembrane segments spans residues 62 to 82 (AAVGWLELLAGLLLVVGPPVL), 85 to 105 (ISNVLLILLMMGAVFTLVVLE), and 111 to 131 (YIPAVVCLGLLLLLDSCQFLV).

Belongs to the DoxX family.

It localises to the membrane. This chain is Transmembrane protein 35B, found in Rattus norvegicus (Rat).